The primary structure comprises 413 residues: Interferon-inducible GTPase 1 (413 aa).

Gly2 carries N-myristoyl glycine lipidation. One can recognise an IRG-type G domain in the interval 68–250 (SVLNVAVTGE…PVLMDKLISD (183 aa)). The GDP site is built by Gly79, Gly81, Lys82, Ser83, Ser84, Thr102, and Gly103. Thr102 carries the (Microbial infection) Phosphothreonine; by ROP18 modification. Thr108 carries the post-translational modification (Microbial infection) Phosphothreonine; by ROP18. GDP is bound by residues Lys184, Asp186, Ser187, and Asn232. Residues Cys236 and Cys410 are joined by a disulfide bond.

Belongs to the TRAFAC class dynamin-like GTPase superfamily. IRG family. As to quaternary structure, monomer, as apoenzyme and in the GDP-bound form. Homooligomer, upon GTP binding. Interacts with HOOK3. (Microbial infection) Interacts with Toxoplasma gondii GRA7 in GTP-dependent manner; the interaction results in faster turnover of the GTP-activated IIGP1 oligomer. Interacts with T.gondii ROP5; the interaction results in inhibition of IRGA6/IIGP1 GTPase activity and oligomerization. Post-translationally, myristoylated. In terms of processing, (Microbial infection) Phosphorylated by Toxoplasma gondii ROP18 from virulent strains.

It is found in the cytoplasm. The protein localises to the nucleus membrane. Its subcellular location is the endoplasmic reticulum membrane. The protein resides in the golgi apparatus. It localises to the golgi stack membrane. It is found in the parasitophorous vacuole membrane. The catalysed reaction is GTP + H2O = GDP + phosphate + H(+). Its function is as follows. GTPase with low activity. Has higher affinity for GDP than for GTP. Plays a role in resistance to intracellular pathogens. During infection with avirulent Toxoplasma gondii strains, recruited to the parasitophorous vacuole membrane. Required for disruption of the parasitophorous vacuole formed following T.gondii infection and subsequent killing of the parasite. Mediates resistance to Chlamydia trachomatis infection by targeting bacterial inclusions to autophagosomes for subsequent lysosomal destruction. The protein is Interferon-inducible GTPase 1 (Iigp1) of Mus musculus (Mouse).